The following is a 312-amino-acid chain: NAD(P)(+)--arginine ADP-ribosyltransferase 1 (312 aa).

The N-terminal stretch at 1–20 is a signal peptide; sequence MELLALRWVLLAGTLLSTSA. The propeptide occupies 21–31; that stretch reads ASSALQEGDLG. Cystine bridges form between Cys-51–Cys-260 and Cys-159–Cys-208. Residues 71–256 enclose the TR mART core domain; sequence IAYAVTWRQA…IQLHSKGKMS (186 aa). Tyr-108, Arg-164, and Gln-183 together coordinate NAD(+). The active site involves Arg-164. The active site involves Ser-186. Position 217 (Ser-217) interacts with NAD(+). The active site involves Glu-224. A propeptide spanning residues 267 to 312 is cleaved from the precursor; sequence GGQWGRGHQEVGLGLSPGLSLPVLPCRRRVWEGLGHREGDPIPAAV.

It belongs to the Arg-specific ADP-ribosyltransferase family.

Its subcellular location is the secreted. It is found in the extracellular space. The catalysed reaction is L-arginyl-[protein] + NAD(+) = N(omega)-(ADP-D-ribosyl)-L-arginyl-[protein] + nicotinamide + H(+). This chain is NAD(P)(+)--arginine ADP-ribosyltransferase 1, found in Gallus gallus (Chicken).